Consider the following 448-residue polypeptide: Methylenetetrahydrofolate--tRNA-(uracil-5-)-methyltransferase TrmFO (448 aa).

Position 13–18 (glycine 13–glycine 18) interacts with FAD.

Belongs to the MnmG family. TrmFO subfamily. FAD is required as a cofactor.

The protein localises to the cytoplasm. The enzyme catalyses uridine(54) in tRNA + (6R)-5,10-methylene-5,6,7,8-tetrahydrofolate + NADH + H(+) = 5-methyluridine(54) in tRNA + (6S)-5,6,7,8-tetrahydrofolate + NAD(+). The catalysed reaction is uridine(54) in tRNA + (6R)-5,10-methylene-5,6,7,8-tetrahydrofolate + NADPH + H(+) = 5-methyluridine(54) in tRNA + (6S)-5,6,7,8-tetrahydrofolate + NADP(+). Functionally, catalyzes the folate-dependent formation of 5-methyl-uridine at position 54 (M-5-U54) in all tRNAs. In Streptococcus pyogenes serotype M2 (strain MGAS10270), this protein is Methylenetetrahydrofolate--tRNA-(uracil-5-)-methyltransferase TrmFO.